Reading from the N-terminus, the 370-residue chain is Prolactin-releasing peptide receptor (370 aa).

The Extracellular portion of the chain corresponds to 1-62; it reads MASLPTQGPA…LQLVHQLKGL (62 aa). N-linked (GlcNAc...) asparagine glycosylation is found at N27 and N36. Residues 63–83 form a helical membrane-spanning segment; that stretch reads IVLLYSIVVVVGLVGNCLLVL. Residues 84-101 are Cytoplasmic-facing; sequence VIARVRRLHNVTNFLIGN. Residues 102-122 form a helical membrane-spanning segment; sequence LALSDVLMCTACVPLTLAYAF. Residues 123–126 are Extracellular-facing; it reads EPRG. A helical membrane pass occupies residues 127–147; the sequence is WVFGGGLCHLVFFLQPVTVYV. Cysteines 134 and 211 form a disulfide. At 148 to 175 the chain is on the cytoplasmic side; that stretch reads SVFTLTTIAVDRYVVLVHPLRRRISLRF. A helical transmembrane segment spans residues 176-196; sequence SAYAVLAIWALSAVLALPAAL. Residues 197–225 are Extracellular-facing; sequence HTYHVELKPHRVRLCEEFWGSQERQRQLY. The helical transmembrane segment at 226-246 threads the bilayer; that stretch reads AWGLLLVTYLLPLLVILLSYV. Topologically, residues 247–276 are cytoplasmic; sequence RVSVNLRNRVVPGCVTQSQADWDRARRRRT. A helical membrane pass occupies residues 277-297; it reads FCLLVVVVVVFAVCWLPLHVF. Residues 298-317 are Extracellular-facing; that stretch reads NLLRDLDPHAIDPYAFGLVQ. Residues 318–338 traverse the membrane as a helical segment; the sequence is LLCHWLAMSSACYNPFIYAWL. Over 339–369 the chain is Cytoplasmic; it reads HDSFREELRKLLLAWPRKIAPHGQSMTVSVV. Residues 365 to 370 form a required for interaction with GRIP1, GRIP2 and PICK1 region; it reads TVSVVI.

It belongs to the G-protein coupled receptor 1 family. As to quaternary structure, interacts through its C-terminal region with the PDZ domain-containing proteins GRIP1, GRIP2 and PICK1. Interacts with PDZ domains 4 and 5 of GRIP1 and with the PDZ domain of PICK1.

The protein localises to the cell membrane. Receptor for prolactin-releasing peptide (PrRP). Implicated in lactation, regulation of food intake and pain-signal processing. In Bos taurus (Bovine), this protein is Prolactin-releasing peptide receptor (PRLHR).